The following is a 415-amino-acid chain: SNF1 protein kinase subunit beta-2 (415 aa).

Disordered regions lie at residues 1-43 (MGTT…EMDA), 55-158 (KCSD…PSEI), and 249-276 (EKNP…SSIA). Gly2 carries N-myristoyl glycine lipidation. Over residues 9–19 (AQKKQTTKKCR) the composition is skewed to basic residues. The span at 55 to 69 (KCSDSQDAGQPSREG) shows a compositional bias: polar residues. Ser66 carries the post-translational modification Phosphoserine. Composition is skewed to basic and acidic residues over residues 122-150 (PKQD…RAKE) and 249-264 (EKNP…EADS). Residues 154-335 (GPSEIKSSLM…LDRQQSNTDT (182 aa)) form a kinase-interacting sequence (KIS); required for interaction with SNF1 region. Ser298 is subject to Phosphoserine. The tract at residues 336–415 (SWLTPPQLPP…QILYTPIESS (80 aa)) is association with SNF1 kinase complex (ASC) domain; required for interaction with SNF4.

The protein belongs to the 5'-AMP-activated protein kinase beta subunit family. Component of the SNF1 kinase complex, a heterotrimeric complex composed of the catalytic alpha subunit SNF1, one of the three related beta subunits SIP1, SIP2 or GAL83, and the regulatory gamma subunit SNF4. The beta subunit serves as a bridge between the catalytic and the regulatory subunit. Interacts (via KIS domain) with SNF1. Interacts (via ASC domain) with SNF4. In terms of processing, phosphorylated by SNF1 in vitro.

It is found in the cytoplasm. The protein localises to the cell membrane. Beta subunit of the SNF1 kinase complex, which is required for transcriptional, metabolic, and developmental adaptations in response to glucose limitation. Has a structural role, mediating heterotrimer formation, and a regulatory role, defining carbon source-regulated subcellular location and substrate specificity of the SNF1 kinase complex. Involved in the regulation of aging. Acts as a negative regulator of nuclear SNF1 activity in young cells by sequestering its activating gamma subunit at the plasma membrane. The chain is SNF1 protein kinase subunit beta-2 (SIP2) from Saccharomyces cerevisiae (strain ATCC 204508 / S288c) (Baker's yeast).